Reading from the N-terminus, the 1349-residue chain is Adhesion G protein-coupled receptor F5 (1349 aa).

Residues 1-24 form the signal peptide; the sequence is MKSSRTVTLYFVLIVICSSEATWS. At 25 to 1016 the chain is on the extracellular side; that stretch reads RPAEPIVHPL…PGSLLKILLD (992 aa). Residues Asn-73, Asn-94, Asn-185, Asn-254, Asn-270, Asn-286, Asn-299, Asn-326, Asn-337, Asn-349, Asn-396, Asn-470, Asn-503, Asn-538, Asn-649, and Asn-666 are each glycosylated (N-linked (GlcNAc...) asparagine). Positions 163–271 constitute an SEA domain; it reads PETYITLKIK…NSFQGTPSNE (109 aa). Ig-like domains lie at 268-366, 367-464, and 469-559; these read PSNE…LDVT, PIRI…IAVT, and ANLT…KDVT. A disulfide bridge connects residues Cys-291 and Cys-348. Residues Cys-389 and Cys-447 are joined by a disulfide bond. An intrachain disulfide couples Cys-490 to Cys-543. Ser-819 bears the Phosphoserine mark. N-linked (GlcNAc...) asparagine glycosylation is found at Asn-820, Asn-958, and Asn-963. Residues 842–1006 enclose the GAIN-B domain; sequence TPPFLFHPNV…SILMSPDSPD (165 aa). Disulfide bonds link Cys-954–Cys-988 and Cys-973–Cys-990. The segment at 954–1006 is GPS; it reads CVFWNFSLANNTGGWDSSGCTVEDDGRDNRDRVFCKCNHLTSFSILMSPDSPD. The interval 994 to 1009 is tethered agonist; it reads TSFSILMSPDSPDPGS. A helical membrane pass occupies residues 1017–1036; it reads IISYIGLGFSIVSLAACLVV. Over 1037-1055 the chain is Cytoplasmic; that stretch reads EAMVWKSVTKNRTSYMRHI. Residues 1056-1078 form a helical membrane-spanning segment; it reads CIVNIALCLLIADIWFIVAGAIH. Residues 1079 to 1097 are Extracellular-facing; sequence DGHYPLNETACVAATFFIH. Asn-1085 is a glycosylation site (N-linked (GlcNAc...) asparagine). A helical transmembrane segment spans residues 1098–1120; that stretch reads FFYLSVFFWMLTLGLMLFYRLIF. Residues 1121–1131 are Cytoplasmic-facing; it reads ILHDASKSTQK. A helical membrane pass occupies residues 1132–1154; the sequence is AIAFSLGYGCPLIISSITVGVTQ. Residues 1155–1173 lie on the Extracellular side of the membrane; sequence PQEVYMRKNACWLNWEDTR. The chain crosses the membrane as a helical span at residues 1174-1196; that stretch reads ALLAFAIPALIIVVVNVSITVVV. Residues 1197 to 1216 are Cytoplasmic-facing; it reads ITKILRPSVGDKPGKQEKSS. Residues 1217–1239 traverse the membrane as a helical segment; the sequence is LFQISKSIGVLTPLLGLTWGFGL. The Extracellular segment spans residues 1240–1248; sequence ATVIQGSNA. The chain crosses the membrane as a helical span at residues 1249–1271; sequence VFHIIFTLLNAFQGLFILLFGCL. Topologically, residues 1272 to 1349 are cytoplasmic; sequence WDQKVQEALL…NSSSAYSLLN (78 aa). The residue at position 1303 (Thr-1303) is a Phosphothreonine. Ser-1310 carries the phosphoserine modification. Residues 1329-1343 are compositionally biased toward low complexity; sequence STPETTSSSVENSSS. Residues 1329-1349 form a disordered region; the sequence is STPETTSSSVENSSSAYSLLN.

The protein belongs to the G-protein coupled receptor 2 family. Adhesion G-protein coupled receptor (ADGR) subfamily. Homodimer; disulfide-linked. Heterodimer of 2 chains generated by proteolytic processing; the large extracellular N-terminal fragment and the membrane-bound C-terminal fragment predominantly remain associated and non-covalently linked. Fragment generates by the processing enzyme furin remains attached to the extracellular N-terminal fragment. Interacts (via N-terminal extracellular domain) with SFTPD. Highly glycosylated. Post-translationally, proteolytically cleaved at multiple sites: one in the GPS region of the GAIN-B domain (S1 site) and the other in the SEA domain (S2 site). The proteolytic cleavage at S1 site generates an extracellular subunit and a seven-transmembrane subunit. The proteolytic cleavage at S2 site generates a fragment that undergoes proteolytic cleavage by the processing enzyme furin. In terms of tissue distribution, highly expressed in the lung and to a much lesser extent in the kidney and heart. Dense localization in alveolar walls of the lung and in the intercalated cells of the collecting duct of the kidney.

It localises to the cell membrane. As an adhesion G protein-coupled receptor (aGPCR) exhibits a large N-terminal extracellular domain containing highly conserved GPCR autoproteolysis-inducing (GAIN) domain. During synthesis, intracellular autoproteolytic processing of nascent chain within the GAIN domain generates a mature protein, consisting of an N-terminal fragment that is non-covalently linked to the C-terminal fragment. The mature protein is routed to the plasma membrane where the N- and C-terminal fragments remain associated, forming the holoreceptor. Dissociation of the aGPCR fragments stimulates G protein signaling through the action of the tethered-peptide agonist stalk that is occluded within the GAIN domain in the holoreceptor form. This dissociation might be induced by ligand binding, such as that of sFNDC4. In terms of biological role, receptor that plays a critical role in lung surfactant homeostasis. May play a role in controlling adipocyte function. Functionally, adhesion G protein-coupled receptor. In alveolar type II (ATII or AT2) cells, required for normal lung surfactant homeostasis. Modulation of both surfactant secretion and uptake by ATII cells is mediated by the downstream activation of GNAQ/GNA11 proteins and may be a consequence of increased cortical F-actin assembly induced by ADGRF5 activation. In the kidney, may play a role in the regulation of acid excretion into the primary urine, possibly by regulating the surface expression of V-ATPase proton pump. As a receptor for soluble FNDC4 (sFNDC4), required for proper systemic glucose tolerance, specifically sensitizing white adipose tissue to insulin. Also plays a role in sFNDC4-induced decrease of local inflammation in white adipose tissue. This chain is Adhesion G protein-coupled receptor F5 (Adgrf5), found in Rattus norvegicus (Rat).